A 183-amino-acid polypeptide reads, in one-letter code: Ribosome rescue factor SmrB (183 aa).

The region spanning 98–173 is the Smr domain; that stretch reads LDLHGLTQLQ…GDAALLVLIE (76 aa).

Belongs to the SmrB family. Associates with collided ribosomes, but not with correctly translating polysomes.

In terms of biological role, acts as a ribosome collision sensor. Detects stalled/collided disomes (pairs of ribosomes where the leading ribosome is stalled and a second ribosome has collided with it) and endonucleolytically cleaves mRNA at the 5' boundary of the stalled ribosome. Stalled/collided disomes form a new interface (primarily via the 30S subunits) that binds SmrB. Cleaved mRNA becomes available for tmRNA ligation, leading to ribosomal subunit dissociation and rescue of stalled ribosomes. This Escherichia coli (strain 55989 / EAEC) protein is Ribosome rescue factor SmrB.